The chain runs to 1612 residues: DNA topoisomerase 2-beta (1612 aa).

A2 is subject to N-acetylalanine. N6-acetyllysine is present on K3. Residues K21 and K22 each participate in a glycyl lysine isopeptide (Lys-Gly) (interchain with G-Cter in SUMO2) cross-link. ATP-binding positions include N100, N129, and S157–N159. Glycyl lysine isopeptide (Lys-Gly) (interchain with G-Cter in SUMO2) cross-links involve residues K165 and K166. G170–K177 lines the ATP pocket. Glycyl lysine isopeptide (Lys-Gly) (interchain with G-Cter in SUMO2) cross-links involve residues K216 and K287. Residues K351–K353 form an interaction with DNA region. Glycyl lysine isopeptide (Lys-Gly) (interchain with G-Cter in SUMO2) cross-links involve residues K355 and K361. Q385 to K387 lines the ATP pocket. Glycyl lysine isopeptide (Lys-Gly) (interchain with G-Cter in SUMO2) cross-links involve residues K425, K427, and K434. The Toprim domain maps to C464–E581. Residues E470, D550, and D552 each coordinate Mg(2+). Residues K588, K593, K623, K631, K634, K664, and K700 each participate in a glycyl lysine isopeptide (Lys-Gly) (interchain with G-Cter in SUMO2) cross-link. In terms of domain architecture, Topo IIA-type catalytic spans I724–L1177. Y814 serves as the catalytic O-(5'-phospho-DNA)-tyrosine intermediate. Residues K999–S1008 form an interaction with DNA region. A Glycyl lysine isopeptide (Lys-Gly) (interchain with G-Cter in SUMO2) cross-link involves residue K1080. The tract at residues A1098 to G1128 is disordered. Glycyl lysine isopeptide (Lys-Gly) (interchain with G-Cter in SUMO2) cross-links involve residues K1202, K1205, K1214, and K1215. At S1224 the chain carries Phosphoserine. Residues K1238, K1250, and K1259 each participate in a glycyl lysine isopeptide (Lys-Gly) (interchain with G-Cter in SUMO2) cross-link. Residues L1245–R1586 form a disordered region. A Phosphothreonine modification is found at T1280. Residues K1311 and K1315 each participate in a glycyl lysine isopeptide (Lys-Gly) (interchain with G-Cter in SUMO2) cross-link. Basic and acidic residues-rich tracts occupy residues P1322–S1332 and S1346–Y1358. Phosphoserine occurs at positions 1324, 1328, 1330, 1332, and 1346. Y1358 is modified (phosphotyrosine). A compositionally biased stretch (acidic residues) spans F1362–L1379. S1363 and S1376 each carry phosphoserine. K1385 participates in a covalent cross-link: Glycyl lysine isopeptide (Lys-Gly) (interchain with G-Cter in SUMO2). A Phosphoserine modification is found at S1387. Residue T1390 is modified to Phosphothreonine. Position 1400 is a phosphoserine (S1400). Y1408 carries the post-translational modification Phosphotyrosine. A Phosphoserine modification is found at S1411. The segment covering A1417–Q1429 has biased composition (basic and acidic residues). K1427 is covalently cross-linked (Glycyl lysine isopeptide (Lys-Gly) (interchain with G-Cter in SUMO2)). S1428, S1439, and S1441 each carry phosphoserine. K1443 is covalently cross-linked (Glycyl lysine isopeptide (Lys-Gly) (interchain with G-Cter in SUMO2)). The segment covering K1443–S1453 has biased composition (basic and acidic residues). A phosphoserine mark is found at S1448, S1453, and S1460. A Glycyl lysine isopeptide (Lys-Gly) (interchain with G-Cter in SUMO2) cross-link involves residue K1477. The segment at K1493 to K1499 is interaction with PLSCR1. A phosphoserine mark is found at S1509, S1511, and S1513. The span at G1526–A1536 shows a compositional bias: basic residues. 2 positions are modified to phosphoserine: S1537 and S1539. The segment covering K1550–K1561 has biased composition (basic residues). T1562 is modified (phosphothreonine). 2 positions are modified to phosphoserine: S1563 and S1568. Y1596 carries the post-translational modification Phosphotyrosine. S1600 is subject to Phosphoserine.

This sequence belongs to the type II topoisomerase family. In terms of assembly, homodimer. Interacts with KIAA1210. Interacts with PLSCR1. Mg(2+) is required as a cofactor. It depends on Mn(2+) as a cofactor. Requires Ca(2+) as cofactor.

It is found in the nucleus. It localises to the nucleolus. The protein resides in the nucleoplasm. It catalyses the reaction ATP-dependent breakage, passage and rejoining of double-stranded DNA.. Key decatenating enzyme that alters DNA topology by binding to two double-stranded DNA molecules, generating a double-stranded break in one of the strands, passing the intact strand through the broken strand, and religating the broken strand. Plays a role in B-cell differentiation. The protein is DNA topoisomerase 2-beta (Top2b) of Mus musculus (Mouse).